A 549-amino-acid polypeptide reads, in one-letter code: Chaperonin GroEL 3 (549 aa).

ATP-binding positions include 29–32 (TLGP), 86–90 (DGTTT), glycine 414, 477–479 (NAA), and aspartate 493.

It belongs to the chaperonin (HSP60) family. In terms of assembly, forms a cylinder of 14 subunits composed of two heptameric rings stacked back-to-back. Interacts with the co-chaperonin GroES.

It localises to the cytoplasm. It catalyses the reaction ATP + H2O + a folded polypeptide = ADP + phosphate + an unfolded polypeptide.. Its function is as follows. Together with its co-chaperonin GroES, plays an essential role in assisting protein folding. The GroEL-GroES system forms a nano-cage that allows encapsulation of the non-native substrate proteins and provides a physical environment optimized to promote and accelerate protein folding. The chain is Chaperonin GroEL 3 from Frankia casuarinae (strain DSM 45818 / CECT 9043 / HFP020203 / CcI3).